Reading from the N-terminus, the 164-residue chain is Peptide methionine sulfoxide reductase MsrA (164 aa).

C16 is an active-site residue.

This sequence belongs to the MsrA Met sulfoxide reductase family.

The catalysed reaction is L-methionyl-[protein] + [thioredoxin]-disulfide + H2O = L-methionyl-(S)-S-oxide-[protein] + [thioredoxin]-dithiol. It carries out the reaction [thioredoxin]-disulfide + L-methionine + H2O = L-methionine (S)-S-oxide + [thioredoxin]-dithiol. In terms of biological role, has an important function as a repair enzyme for proteins that have been inactivated by oxidation. Catalyzes the reversible oxidation-reduction of methionine sulfoxide in proteins to methionine. The protein is Peptide methionine sulfoxide reductase MsrA of Clostridium tetani (strain Massachusetts / E88).